Here is a 217-residue protein sequence, read N- to C-terminus: Non-structural protein NS3 (217 aa).

It belongs to the orbivirus NS3 family.

Functionally, may play a role in the release of virions from infected cells. The polypeptide is Non-structural protein NS3 (Segment-10) (African horse sickness virus (AHSV)).